The chain runs to 832 residues: Protein P (832 aa).

The segment at 1-177 is terminal protein domain (TP); the sequence is MPLSYQHFRR…FCGSPYSWEQ (177 aa). Residues 178–335 are spacer; it reads ELQHGAESFH…YCLSHIVNLL (158 aa). The tract at residues 241-263 is disordered; it reads RRPFGVEPSGSGHTTNLASKSAS. Polar residues predominate over residues 251 to 263; that stretch reads SGHTTNLASKSAS. Residues 336 to 679 form a polymerase/reverse transcriptase domain (RT) region; it reads EDWGPCAEHG…YLNLYPVARQ (344 aa). The region spanning 346-589 is the Reverse transcriptase domain; it reads EHHIRIPRTP…YSLHFMGYVI (244 aa). Mg(2+) contacts are provided by aspartate 418, aspartate 540, and aspartate 541.

Belongs to the hepadnaviridae P protein family.

The catalysed reaction is DNA(n) + a 2'-deoxyribonucleoside 5'-triphosphate = DNA(n+1) + diphosphate. It carries out the reaction Endonucleolytic cleavage to 5'-phosphomonoester.. Activated by host HSP70 and HSP40 in vitro to be able to bind the epsilon loop of the pgRNA. Because deletion of the RNase H region renders the protein partly chaperone-independent, the chaperones may be needed indirectly to relieve occlusion of the RNA-binding site by this domain. Inhibited by several reverse-transcriptase inhibitors: Lamivudine, Adefovir and Entecavir. Its function is as follows. Multifunctional enzyme that converts the viral RNA genome into dsDNA in viral cytoplasmic capsids. This enzyme displays a DNA polymerase activity that can copy either DNA or RNA templates, and a ribonuclease H (RNase H) activity that cleaves the RNA strand of RNA-DNA heteroduplexes in a partially processive 3'- to 5'-endonucleasic mode. Neo-synthesized pregenomic RNA (pgRNA) are encapsidated together with the P protein, and reverse-transcribed inside the nucleocapsid. Initiation of reverse-transcription occurs first by binding the epsilon loop on the pgRNA genome, and is initiated by protein priming, thereby the 5'-end of (-)DNA is covalently linked to P protein. Partial (+)DNA is synthesized from the (-)DNA template and generates the relaxed circular DNA (RC-DNA) genome. After budding and infection, the RC-DNA migrates in the nucleus, and is converted into a plasmid-like covalently closed circular DNA (cccDNA). The activity of P protein does not seem to be necessary for cccDNA generation, and is presumably released from (+)DNA by host nuclear DNA repair machinery. This chain is Protein P, found in Homo sapiens (Human).